The following is a 380-amino-acid chain: Septin homolog spn6 (380 aa).

One can recognise a Septin-type G domain in the interval 27-297 (KECGLTIMLC…ERYRREQLTN (271 aa)). The segment at 37–44 (GASGTGKT) is G1 motif. GTP-binding positions include 37–44 (GASGTGKT), Thr-72, Gly-98, 177–185 (KADTFTTPE), and Arg-246. Residues 95 to 98 (DTPG) are G3 motif. A G4 motif region spans residues 176 to 179 (AKAD). Residues 304-380 (KLKKEHYERL…KSYKGRGHKK (77 aa)) adopt a coiled-coil conformation.

This sequence belongs to the TRAFAC class TrmE-Era-EngA-EngB-Septin-like GTPase superfamily. Septin GTPase family. As to quaternary structure, component of the sporulation-specific septin complex composed of at least spn2, spn5, spn6 and spn7.

The protein localises to the cytoplasm. The protein resides in the forespore membrane. Functionally, septin-like protein involved in the correct orientation of forespore membrane extension during sporulation. In Schizosaccharomyces pombe (strain 972 / ATCC 24843) (Fission yeast), this protein is Septin homolog spn6 (spn6).